The sequence spans 224 residues: Endoplasmic reticulum vesicle protein 25 (224 aa).

Residues 1-25 (MIPPRSLGSTAALLLVLLFTTLASA) form the signal peptide. Over 26–190 (IKFDLPSNAH…ADTNLSTNMR (165 aa)) the chain is Lumenal. The 94-residue stretch at 38-131 (TKCIWNYALS…IPVVTIDLDV (94 aa)) folds into the GOLD domain. A helical transmembrane segment spans residues 191–211 (VTNFAILTLIALIALGVWQVF). The Cytoplasmic portion of the chain corresponds to 212–224 (HLRGFFKRKYLID).

This sequence belongs to the EMP24/GP25L family.

It is found in the endoplasmic reticulum membrane. The protein localises to the golgi apparatus membrane. Its function is as follows. Constituent of COPII-coated endoplasmic reticulum-derived transport vesicles. Required for efficient transport of a subset of secretory proteins to the Golgi. Facilitates retrograde transport from the Golgi to the endoplasmic reticulum. The chain is Endoplasmic reticulum vesicle protein 25 (ERV25) from Mycosarcoma maydis (Corn smut fungus).